We begin with the raw amino-acid sequence, 44 residues long: Photosystem I reaction center subunit IX (44 aa).

The helical transmembrane segment at 7–27 (YLSVAPVLSTLWFGSLAGLLI) threads the bilayer.

It belongs to the PsaJ family.

The protein localises to the plastid. It localises to the chloroplast thylakoid membrane. In terms of biological role, may help in the organization of the PsaE and PsaF subunits. The chain is Photosystem I reaction center subunit IX from Lactuca sativa (Garden lettuce).